The primary structure comprises 505 residues: Glutamate--tRNA ligase (505 aa).

Residues 12–22 carry the 'HIGH' region motif; sequence PSPTGDPHVGT. The 'KMSKS' region signature appears at 253–257; it reads KLSKR. Lysine 256 is an ATP binding site.

This sequence belongs to the class-I aminoacyl-tRNA synthetase family. Glutamate--tRNA ligase type 1 subfamily. Monomer.

It localises to the cytoplasm. It catalyses the reaction tRNA(Glu) + L-glutamate + ATP = L-glutamyl-tRNA(Glu) + AMP + diphosphate. Catalyzes the attachment of glutamate to tRNA(Glu) in a two-step reaction: glutamate is first activated by ATP to form Glu-AMP and then transferred to the acceptor end of tRNA(Glu). The polypeptide is Glutamate--tRNA ligase (Chlamydia felis (strain Fe/C-56) (Chlamydophila felis)).